A 275-amino-acid chain; its full sequence is Protein CIMAP1C (275 aa).

STPGR repeat units follow at residues 200–225 (PGPA…MAKR) and 236–261 (PGPG…MGIK).

It belongs to the CIMAP family.

The protein is Protein CIMAP1C (CIMAP1C) of Mus musculus (Mouse).